A 276-amino-acid chain; its full sequence is Aquaporin-6 (276 aa).

Topologically, residues 1–22 are cytoplasmic; sequence MEPGLCNRAYLLVGGLWTAISK. A helical transmembrane segment spans residues 23 to 43; sequence ALFAEFLATGLYVFFGVGSVL. The Extracellular segment spans residues 44-51; sequence PWPVALPS. A helical membrane pass occupies residues 52–70; it reads VLQVAITFNLATATAVQIS. At 71–75 the chain is on the cytoplasmic side; sequence WKTSG. Positions 76-85 form an intramembrane region, discontinuously helical; that stretch reads AHANPAVTLA. The NPA 1 signature appears at 79 to 81; it reads NPA. Over 86–96 the chain is Cytoplasmic; it reads YLVGSHISLPR. A helical transmembrane segment spans residues 97–118; the sequence is AVAYIAAQLAGATVGAALLYGV. At 119–138 the chain is on the extracellular side; the sequence is TPGGVRETLGVNVVHNSTST. A glycan (N-linked (GlcNAc...) asparagine) is linked at Asn-134. Residues 139–159 traverse the membrane as a helical segment; sequence GQAVAVELVLTLQLVLCVFAS. At 160-165 the chain is on the cytoplasmic side; it reads MDSRQT. Residues 166–185 traverse the membrane as a helical segment; sequence LGSPAAMIGTSVALGHLIGI. Residues 186 to 189 lie on the Extracellular side of the membrane; that stretch reads YFTG. Positions 190-202 form an intramembrane region, discontinuously helical; it reads CSMNPARSFGPAV. An NPA 2 motif is present at residues 193-195; the sequence is NPA. Topologically, residues 203 to 210 are extracellular; the sequence is IVGKFAVH. A helical membrane pass occupies residues 211 to 231; that stretch reads WIFWVGPLTGAVLASLIYNFI. Residues 232–276 lie on the Cytoplasmic side of the membrane; that stretch reads LFPDTKTVAQRLAILVGTTKVEKVVDLEPQKKESQTNSEDTEVSV.

Belongs to the MIP/aquaporin (TC 1.A.8) family. As to quaternary structure, homotetramer; each monomer provides an independent solute pore. Post-translationally, N-glycosylated. In terms of tissue distribution, kidney.

It is found in the cytoplasmic vesicle membrane. The enzyme catalyses nitrate(in) = nitrate(out). It catalyses the reaction iodide(out) = iodide(in). It carries out the reaction bromide(in) = bromide(out). The catalysed reaction is chloride(in) = chloride(out). The enzyme catalyses Na(+)(in) = Na(+)(out). It catalyses the reaction H2O(in) = H2O(out). It carries out the reaction CO2(out) = CO2(in). The catalysed reaction is NH4(+)(in) = NH4(+)(out). Its activity is regulated as follows. Activated by mercury and pH-gated, anion permeability is observed at pH 5.5 and increases markedly at pH 4.0. Selectivity for chloride increases at low pH. The water channel activity is stimulated by mercury by opposition to other aquaporins. Its function is as follows. Aquaporins form homotetrameric transmembrane channels, with each monomer independently mediating water transport across the plasma membrane along its osmotic gradient. Unlike classical aquaporins, AQP6 is an intracellular channel with selective anion permeability, particularly for nitrate, and exhibits very low water permeability. It may also facilitate the transport of gases, such as CO2 and NH4(+), as demonstrated in vitro. The chain is Aquaporin-6 from Rattus norvegicus (Rat).